The following is a 328-amino-acid chain: tRNA uridine(34) hydroxylase (328 aa).

The region spanning 123–217 (SDPDVLLVDT…YLEEVPQEES (95 aa)) is the Rhodanese domain. C177 acts as the Cysteine persulfide intermediate in catalysis.

It belongs to the TrhO family.

The catalysed reaction is uridine(34) in tRNA + AH2 + O2 = 5-hydroxyuridine(34) in tRNA + A + H2O. Functionally, catalyzes oxygen-dependent 5-hydroxyuridine (ho5U) modification at position 34 in tRNAs. This is tRNA uridine(34) hydroxylase from Psychromonas ingrahamii (strain DSM 17664 / CCUG 51855 / 37).